Here is a 562-residue protein sequence, read N- to C-terminus: NAD-dependent malic enzyme (562 aa).

Tyrosine 101 serves as the catalytic Proton donor. Arginine 154 is a binding site for NAD(+). Lysine 172 acts as the Proton acceptor in catalysis. Residues glutamate 243, aspartate 244, and aspartate 267 each coordinate a divalent metal cation. 2 residues coordinate NAD(+): aspartate 267 and asparagine 415.

Belongs to the malic enzymes family. In terms of assembly, homotetramer. Mg(2+) is required as a cofactor. Mn(2+) serves as cofactor.

The catalysed reaction is (S)-malate + NAD(+) = pyruvate + CO2 + NADH. It catalyses the reaction oxaloacetate + H(+) = pyruvate + CO2. The polypeptide is NAD-dependent malic enzyme (Aliivibrio salmonicida (strain LFI1238) (Vibrio salmonicida (strain LFI1238))).